A 662-amino-acid chain; its full sequence is UvrABC system protein B (662 aa).

The 158-residue stretch at 25-182 (KGIEKREKFQ…KKLVEIQYER (158 aa)) folds into the Helicase ATP-binding domain. Residue 38–45 (GVTGSGKT) coordinates ATP. The Beta-hairpin signature appears at 91 to 114 (YYDYYQPEAYVAQSDTYIEKDASI). Residues 429 to 595 (QIDDLYTSIQ…TIIKDIREVI (167 aa)) enclose the Helicase C-terminal domain. The UVR domain maps to 622 to 657 (DKLIEKYEEEMKEAAQNLQFEKAAHLRDVIYKLKKD).

It belongs to the UvrB family. Forms a heterotetramer with UvrA during the search for lesions. Interacts with UvrC in an incision complex.

The protein resides in the cytoplasm. The UvrABC repair system catalyzes the recognition and processing of DNA lesions. A damage recognition complex composed of 2 UvrA and 2 UvrB subunits scans DNA for abnormalities. Upon binding of the UvrA(2)B(2) complex to a putative damaged site, the DNA wraps around one UvrB monomer. DNA wrap is dependent on ATP binding by UvrB and probably causes local melting of the DNA helix, facilitating insertion of UvrB beta-hairpin between the DNA strands. Then UvrB probes one DNA strand for the presence of a lesion. If a lesion is found the UvrA subunits dissociate and the UvrB-DNA preincision complex is formed. This complex is subsequently bound by UvrC and the second UvrB is released. If no lesion is found, the DNA wraps around the other UvrB subunit that will check the other stand for damage. The protein is UvrABC system protein B of Clostridium botulinum (strain Langeland / NCTC 10281 / Type F).